A 477-amino-acid chain; its full sequence is Ribulose bisphosphate carboxylase large chain (477 aa).

A propeptide spanning residues 1–2 (MS) is cleaved from the precursor. An N-acetylproline modification is found at P3. At K14 the chain carries N6,N6,N6-trimethyllysine. Substrate contacts are provided by N123 and T173. Residue K175 is the Proton acceptor of the active site. A substrate-binding site is contributed by K177. 3 residues coordinate Mg(2+): K201, D203, and E204. K201 carries the N6-carboxylysine modification. The active-site Proton acceptor is the H294. Substrate-binding residues include R295, H327, and S379.

It belongs to the RuBisCO large chain family. Type I subfamily. In terms of assembly, heterohexadecamer of 8 large chains and 8 small chains; disulfide-linked. The disulfide link is formed within the large subunit homodimers. Mg(2+) serves as cofactor. In terms of processing, the disulfide bond which can form in the large chain dimeric partners within the hexadecamer appears to be associated with oxidative stress and protein turnover.

The protein resides in the plastid. The protein localises to the chloroplast. The catalysed reaction is 2 (2R)-3-phosphoglycerate + 2 H(+) = D-ribulose 1,5-bisphosphate + CO2 + H2O. The enzyme catalyses D-ribulose 1,5-bisphosphate + O2 = 2-phosphoglycolate + (2R)-3-phosphoglycerate + 2 H(+). Functionally, ruBisCO catalyzes two reactions: the carboxylation of D-ribulose 1,5-bisphosphate, the primary event in carbon dioxide fixation, as well as the oxidative fragmentation of the pentose substrate in the photorespiration process. Both reactions occur simultaneously and in competition at the same active site. In Nicotiana debneyi (Debney's tobacco), this protein is Ribulose bisphosphate carboxylase large chain.